Consider the following 450-residue polypeptide: Oxygen-independent coproporphyrinogen III oxidase (450 aa).

The region spanning 45–282 (IPAGGSISLY…RTLILWDGYQ (238 aa)) is the Radical SAM core domain. S-adenosyl-L-methionine is bound at residue Tyr-54. 2 residues coordinate [4Fe-4S] cluster: Cys-60 and Cys-64. Position 66 (Phe-66) interacts with S-adenosyl-L-methionine. Cys-67 is a binding site for [4Fe-4S] cluster. Residues Gly-111, 112 to 113 (GT), Glu-144, Gln-171, Arg-183, Asp-208, Ala-242, and Ile-328 each bind S-adenosyl-L-methionine.

It belongs to the anaerobic coproporphyrinogen-III oxidase family. Monomer. The cofactor is [4Fe-4S] cluster.

The protein localises to the cytoplasm. It catalyses the reaction coproporphyrinogen III + 2 S-adenosyl-L-methionine = protoporphyrinogen IX + 2 5'-deoxyadenosine + 2 L-methionine + 2 CO2. The protein operates within porphyrin-containing compound metabolism; protoporphyrin-IX biosynthesis; protoporphyrinogen-IX from coproporphyrinogen-III (AdoMet route): step 1/1. Functionally, involved in the heme and chlorophyll biosynthesis. Catalyzes the anaerobic oxidative decarboxylation of propionate groups of rings A and B of coproporphyrinogen III to yield the vinyl groups in protoporphyrinogen IX. The chain is Oxygen-independent coproporphyrinogen III oxidase (hemZ) from Cereibacter sphaeroides (strain ATCC 17023 / DSM 158 / JCM 6121 / CCUG 31486 / LMG 2827 / NBRC 12203 / NCIMB 8253 / ATH 2.4.1.) (Rhodobacter sphaeroides).